The chain runs to 500 residues: Serine/threonine-protein phosphatase 2A 56 kDa regulatory subunit beta isoform (500 aa).

The span at 1 to 19 shows a compositional bias: low complexity; sequence METKLPPASTPTSPSSPGL. Disordered regions lie at residues 1–55 and 474–500; these read METK…YQSN and GTQG…GGQS. 6 positions are modified to phosphoserine; by CLK2: serine 32, serine 35, serine 44, serine 46, serine 47, and serine 48. Positions 34 to 45 are enriched in basic residues; that stretch reads RSLRRARPRRSH.

It belongs to the phosphatase 2A regulatory subunit B56 family. In terms of assembly, component of the serine/threonine-protein phosphatase 2A complex (PP2A). This complex consists of a common heterodimeric core enzyme, composed of a 36 kDa catalytic subunit (subunit C) and a 65 kDa constant scaffold subunit (PR65 or subunit A), that associates with a variety of regulatory subunits. Proteins that associate with the core dimer include three families of regulatory subunits B (the R2/B/PR55/B55, R3/B''/PR72/PR130/PR59 and R5/B'/B56 families), the 48 kDa variable regulatory subunit, viral proteins, and cell signaling molecules. Interacts with SGO1. Interacts with AKT1. In terms of tissue distribution, highly expressed in brain.

Its subcellular location is the nucleus. As the regulatory component of the serine/threonine-protein phosphatase 2A (PP2A) holoenzyme, modulates substrate specificity, subcellular localization, and responsiveness to phosphorylation. The phosphorylated form mediates the interaction between PP2A and AKT1, leading to AKT1 dephosphorylation. The polypeptide is Serine/threonine-protein phosphatase 2A 56 kDa regulatory subunit beta isoform (PPP2R5B) (Oryctolagus cuniculus (Rabbit)).